The following is a 238-amino-acid chain: Orotidine 5'-phosphate decarboxylase (238 aa).

Substrate-binding positions include Asp18, Lys40, Asp67 to Thr76, Thr122, Arg183, Gln192, and Arg213. Catalysis depends on Lys69, which acts as the Proton donor.

This sequence belongs to the OMP decarboxylase family. Type 1 subfamily. As to quaternary structure, homodimer.

It carries out the reaction orotidine 5'-phosphate + H(+) = UMP + CO2. It participates in pyrimidine metabolism; UMP biosynthesis via de novo pathway; UMP from orotate: step 2/2. Functionally, catalyzes the decarboxylation of orotidine 5'-monophosphate (OMP) to uridine 5'-monophosphate (UMP). The sequence is that of Orotidine 5'-phosphate decarboxylase from Brucella canis (strain ATCC 23365 / NCTC 10854 / RM-666).